Reading from the N-terminus, the 1039-residue chain is Probable inorganic carbon transporter subunit DabA 2 (1039 aa).

Zn(2+) contacts are provided by Cys-462, Asp-464, His-721, and Cys-736.

It belongs to the inorganic carbon transporter (TC 9.A.2) DabA family. Forms a complex with DabB. Requires Zn(2+) as cofactor.

The protein localises to the cell inner membrane. Part of an energy-coupled inorganic carbon pump. This chain is Probable inorganic carbon transporter subunit DabA 2, found in Nitrobacter hamburgensis (strain DSM 10229 / NCIMB 13809 / X14).